A 408-amino-acid chain; its full sequence is Dihydrolipoyllysine-residue acetyltransferase component of pyruvate dehydrogenase complex (408 aa).

The 77-residue stretch at 2–78 (PIKILMPALS…PVNSLIAVLS (77 aa)) folds into the Lipoyl-binding domain. Position 43 is an N6-lipoyllysine (Lys-43). A Peripheral subunit-binding (PSBD) domain is found at 128–165 (FASPLAKRLAKIGDIRLENVQGSGPHGRIVKQDILSYD). Residue His-381 is part of the active site.

It belongs to the 2-oxoacid dehydrogenase family. As to quaternary structure, forms a 24-polypeptide structural core with octahedral symmetry. Requires (R)-lipoate as cofactor.

The enzyme catalyses N(6)-[(R)-dihydrolipoyl]-L-lysyl-[protein] + acetyl-CoA = N(6)-[(R)-S(8)-acetyldihydrolipoyl]-L-lysyl-[protein] + CoA. Functionally, the pyruvate dehydrogenase complex catalyzes the overall conversion of pyruvate to acetyl-CoA and CO(2). It contains multiple copies of three enzymatic components: pyruvate dehydrogenase (E1), dihydrolipoamide acetyltransferase (E2) and lipoamide dehydrogenase (E3). This chain is Dihydrolipoyllysine-residue acetyltransferase component of pyruvate dehydrogenase complex (pdhC), found in Rickettsia prowazekii (strain Madrid E).